We begin with the raw amino-acid sequence, 316 residues long: Ribosomal RNA small subunit methyltransferase H (316 aa).

S-adenosyl-L-methionine contacts are provided by residues 35–37, D55, F84, D105, and Q112; that span reads AGH.

It belongs to the methyltransferase superfamily. RsmH family.

The protein resides in the cytoplasm. The enzyme catalyses cytidine(1402) in 16S rRNA + S-adenosyl-L-methionine = N(4)-methylcytidine(1402) in 16S rRNA + S-adenosyl-L-homocysteine + H(+). Specifically methylates the N4 position of cytidine in position 1402 (C1402) of 16S rRNA. This Streptococcus suis (strain 05ZYH33) protein is Ribosomal RNA small subunit methyltransferase H.